We begin with the raw amino-acid sequence, 910 residues long: Inactive disease susceptibility protein LOV1 (910 aa).

Positions 22–60 (ARLNGIGEQVDGLKRQLGRLQSLLKDADAKKHESERVRN) form a coiled coil. The NB-ARC domain maps to 169-461 (EQSVEALAGH…AAEGIITSSD (293 aa)). LRR repeat units lie at residues 584–609 (LPLL…IGDL), 610–632 (IHLR…LRNL), and 634–655 (LLLY…LKEM).

Belongs to the disease resistance NB-LRR family. RPP8/HRT subfamily.

This chain is Inactive disease susceptibility protein LOV1 (LOV1), found in Arabidopsis thaliana (Mouse-ear cress).